The chain runs to 113 residues: Putative hemolysin E-like protein (113 aa).

This sequence belongs to the hemolysin E family.

The chain is Putative hemolysin E-like protein from Shigella flexneri.